Consider the following 103-residue polypeptide: Histone H4 (103 aa).

The span at 1 to 14 (MTGRGKGGKGLGKG) shows a compositional bias: gly residues. Residues 1-20 (MTGRGKGGKGLGKGGAKRHR) form a disordered region. Thr2 is subject to N-acetylthreonine. Lys6 bears the N6-acetyl-N6-methyllysine; alternate mark. Lys6, Lys9, Lys13, and Lys17 each carry N6-acetyllysine. Residue Lys13 is modified to N6-acetyl-N6-methyllysine; alternate. Lys21 is modified (N6,N6-dimethyllysine). Lys32 is modified (N6-methyllysine).

It belongs to the histone H4 family. As to quaternary structure, the nucleosome is a histone octamer containing two molecules each of H2A, H2B, H3 and H4 assembled in one H3-H4 heterotetramer and two H2A-H2B heterodimers. The octamer wraps approximately 147 bp of DNA.

It localises to the nucleus. The protein localises to the chromosome. In terms of biological role, core component of nucleosome. Nucleosomes wrap and compact DNA into chromatin, limiting DNA accessibility to the cellular machineries which require DNA as a template. Histones thereby play a central role in transcription regulation, DNA repair, DNA replication and chromosomal stability. DNA accessibility is regulated via a complex set of post-translational modifications of histones, also called histone code, and nucleosome remodeling. Functionally, a mixture of histones H2B and H4 has antimicrobial activity against the Gram-positive bacterium M.luteus. This is Histone H4 from Penaeus vannamei (Whiteleg shrimp).